The chain runs to 441 residues: tRNA-2-methylthio-N(6)-dimethylallyladenosine synthase (441 aa).

The 117-residue stretch at 3 to 119 (KKVSIRTFGC…LPGLIRNAFQ (117 aa)) folds into the MTTase N-terminal domain. 6 residues coordinate [4Fe-4S] cluster: Cys12, Cys48, Cys82, Cys155, Cys159, and Cys162. A Radical SAM core domain is found at 141 to 371 (RSGSISAFIP…IDLQSGISGE (231 aa)). The region spanning 374–437 (GNDVGSVQEV…QATLIGRCQD (64 aa)) is the TRAM domain.

This sequence belongs to the methylthiotransferase family. MiaB subfamily. Monomer. It depends on [4Fe-4S] cluster as a cofactor.

The protein resides in the cytoplasm. The enzyme catalyses N(6)-dimethylallyladenosine(37) in tRNA + (sulfur carrier)-SH + AH2 + 2 S-adenosyl-L-methionine = 2-methylsulfanyl-N(6)-dimethylallyladenosine(37) in tRNA + (sulfur carrier)-H + 5'-deoxyadenosine + L-methionine + A + S-adenosyl-L-homocysteine + 2 H(+). Functionally, catalyzes the methylthiolation of N6-(dimethylallyl)adenosine (i(6)A), leading to the formation of 2-methylthio-N6-(dimethylallyl)adenosine (ms(2)i(6)A) at position 37 in tRNAs that read codons beginning with uridine. In Prosthecochloris aestuarii (strain DSM 271 / SK 413), this protein is tRNA-2-methylthio-N(6)-dimethylallyladenosine synthase.